A 758-amino-acid chain; its full sequence is 5-methyltetrahydropteroyltriglutamate--homocysteine methyltransferase (758 aa).

Residues 16 to 19 (RELK) and Lys-112 each bind 5-methyltetrahydropteroyltri-L-glutamate. L-homocysteine-binding positions include 433–435 (IGS) and Glu-486. Residues 433-435 (IGS) and Glu-486 each bind L-methionine. 5-methyltetrahydropteroyltri-L-glutamate is bound by residues 517–518 (RC) and Trp-563. Asp-601 contacts L-homocysteine. Asp-601 contributes to the L-methionine binding site. Glu-607 is a binding site for 5-methyltetrahydropteroyltri-L-glutamate. Positions 643, 645, and 667 each coordinate Zn(2+). His-696 serves as the catalytic Proton donor. Cys-728 is a binding site for Zn(2+).

This sequence belongs to the vitamin-B12 independent methionine synthase family. Zn(2+) is required as a cofactor.

It carries out the reaction 5-methyltetrahydropteroyltri-L-glutamate + L-homocysteine = tetrahydropteroyltri-L-glutamate + L-methionine. It participates in amino-acid biosynthesis; L-methionine biosynthesis via de novo pathway; L-methionine from L-homocysteine (MetE route): step 1/1. In terms of biological role, catalyzes the transfer of a methyl group from 5-methyltetrahydrofolate to homocysteine resulting in methionine formation. The chain is 5-methyltetrahydropteroyltriglutamate--homocysteine methyltransferase from Neisseria meningitidis serogroup B (strain ATCC BAA-335 / MC58).